Reading from the N-terminus, the 676-residue chain is Probable LRR receptor-like serine/threonine-protein kinase At4g31250 (676 aa).

An N-terminal signal peptide occupies residues 1–26 (MTRDDKFPIVYSLLLIVLLFVSPIYG). Over 27–242 (DGDADALLKF…LLPCRYTRPP (216 aa)) the chain is Extracellular. N-linked (GlcNAc...) asparagine glycosylation is found at Asn42, Asn73, and Asn83. LRR repeat units lie at residues 98–122 (IRGLKSISFMRNHFEGKIPRGIDGL), 123–146 (VSLAHLYLAHNQFTGEIDGDLFSG), 148–171 (KALLKVHLEGNRFSGEIPESLGKL), 172–195 (PKLTELNLEDNMFTGKIPAFKQKN), and 197–218 (VTVNVANNQLEGRIPLTLGLMN). Residue Asn218 is glycosylated (N-linked (GlcNAc...) asparagine). A helical transmembrane segment spans residues 243 to 263 (FFTVFLLALTILAVVVLITVF). The Cytoplasmic portion of the chain corresponds to 264-676 (LSVCILSRRQ…RAMTEEFSLM (413 aa)). A compositionally biased stretch (polar residues) spans 319–330 (TVQRDSTATSGA). The interval 319–347 (TVQRDSTATSGAISVGGLSPDEDKRGDQR) is disordered. The Protein kinase domain maps to 366–640 (RASAEVLGSG…HEAVDRIEEV (275 aa)). At Ser368 the chain carries Phosphoserine. ATP contacts are provided by residues 372–380 (LGSGGFGSS) and Lys394. 2 positions are modified to phosphoserine: Ser446 and Ser543. Residues 641 to 676 (DRDAGGGQESVRSSYVTASDGDHRSSRAMTEEFSLM) form a disordered region.

Belongs to the protein kinase superfamily. Ser/Thr protein kinase family.

The protein localises to the membrane. The catalysed reaction is L-seryl-[protein] + ATP = O-phospho-L-seryl-[protein] + ADP + H(+). The enzyme catalyses L-threonyl-[protein] + ATP = O-phospho-L-threonyl-[protein] + ADP + H(+). The polypeptide is Probable LRR receptor-like serine/threonine-protein kinase At4g31250 (Arabidopsis thaliana (Mouse-ear cress)).